Consider the following 208-residue polypeptide: Ribosome maturation factor RimP (208 aa).

Residues 165–208 form a disordered region; that stretch reads TAQPKKGQRQGKEPAKESGQKKQLAEAAPRSGSKRSERGSEKRK. Basic and acidic residues-rich tracts occupy residues 174–188 and 198–208; these read QGKEPAKESGQKKQL and KRSERGSEKRK.

It belongs to the RimP family.

It is found in the cytoplasm. Functionally, required for maturation of 30S ribosomal subunits. This is Ribosome maturation factor RimP from Sorangium cellulosum (strain So ce56) (Polyangium cellulosum (strain So ce56)).